Consider the following 1437-residue polypeptide: Envelopment polyprotein (1437 aa).

The N-terminal stretch at Met-1–Thr-21 is a signal peptide. Over Ala-22–Asn-207 the chain is Lumenal. N-linked (GlcNAc...) asparagine; by host glycosylation is found at Asn-65 and Asn-88. Residues Ile-208–Thr-228 form a helical membrane-spanning segment. The Cytoplasmic segment spans residues Arg-229–Lys-312. A helical transmembrane segment spans residues Gly-313 to Leu-333. The Lumenal segment spans residues Glu-334–Ser-373. Residues Ile-374–Leu-394 traverse the membrane as a helical segment. Over Glu-395–Lys-460 the chain is Cytoplasmic. The chain crosses the membrane as a helical span at residues Leu-461–Ala-481. Over Gly-482–Tyr-1391 the chain is Lumenal. Residues Asn-627 and Asn-1173 are each glycosylated (N-linked (GlcNAc...) asparagine; by host). Residues Leu-1392–Leu-1412 traverse the membrane as a helical segment. The Cytoplasmic portion of the chain corresponds to Met-1413–Arg-1437.

It belongs to the orthobunyavirus envelope glycoprotein family. As to quaternary structure, glycoprotein C and Glycoprotein N interact with each other. Post-translationally, specific enzymatic cleavages in vivo yield mature proteins including nonstructural protein NSm, Glycoprotein C, and Glycoprotein N.

Its subcellular location is the virion membrane. The protein resides in the host Golgi apparatus membrane. It is found in the host endoplasmic reticulum membrane. Functionally, glycoprotein C and Glycoprotein N interact with each other and are present at the surface of the virion. They are able to attach the virion to a cell receptor and to promote fusion of membranes after endocytosis of the virion. The chain is Envelopment polyprotein (GP) from Culex.